We begin with the raw amino-acid sequence, 299 residues long: Prolyl 4-hydroxylase 2 (299 aa).

Topologically, residues 1-5 (MSMSR) are cytoplasmic. Residues 6-26 (LGLLLFVAILLVLLQSSTCLI) traverse the membrane as a helical; Signal-anchor for type II membrane protein segment. Residues 27-299 (SSPSSIINPS…GNCRRSCKAC (273 aa)) lie on the Lumenal side of the membrane. In terms of domain architecture, Fe2OG dioxygenase spans 121–246 (NGEDLQVLRY…KWSATKWIHV (126 aa)). Histidine 139 and aspartate 141 together coordinate Fe cation. Asparagine 165 carries an N-linked (GlcNAc...) asparagine glycan. Position 227 (histidine 227) interacts with Fe cation. A 2-oxoglutarate-binding site is contributed by lysine 237. N-linked (GlcNAc...) asparagine glycosylation is found at asparagine 258 and asparagine 263. Residues 259–299 (CTDVNESCERWAVLGECGKNPEYMVGTPEIPGNCRRSCKAC) form the ShKT domain. Cystine bridges form between cysteine 259–cysteine 299, cysteine 266–cysteine 292, and cysteine 275–cysteine 296.

It belongs to the P4HA family. Requires Fe(2+) as cofactor. L-ascorbate is required as a cofactor. As to expression, expressed in epidermal root hair cells (trichoblasts).

It localises to the endoplasmic reticulum membrane. The protein localises to the golgi apparatus membrane. It catalyses the reaction L-prolyl-[collagen] + 2-oxoglutarate + O2 = trans-4-hydroxy-L-prolyl-[collagen] + succinate + CO2. Functionally, catalyzes the post-translational formation of 4-hydroxyproline in -Xaa-Pro-Gly- sequences in proline-rich peptide sequences of plant glycoproteins and other proteins. Hydroxyprolines are important constituent of many plant cell wall glycoproteins such as extensins, hydroxyproline-rich glycoproteins, lectins and arabinogalactan proteins. Possesses high affinity for leucine-rich repeat and proline-rich extensins of root cell walls that are essential for root hair development. Hydroxyprolines define the subsequent O-glycosylation sites by arabinosyltransferases which elongate the O-arabinosides on extensins. Has low affinity for the substrates tested in vitro. The protein is Prolyl 4-hydroxylase 2 of Arabidopsis thaliana (Mouse-ear cress).